Consider the following 234-residue polypeptide: Sugar fermentation stimulation protein A (234 aa).

The H-T-H motif DNA-binding region spans 201–220 (LLSEAQNKGVEVLAYKAELS).

It belongs to the SfsA family.

Its function is as follows. Binds to DNA non-specifically. Could be a regulatory factor involved in maltose metabolism. The polypeptide is Sugar fermentation stimulation protein A (Salmonella dublin (strain CT_02021853)).